The following is a 215-amino-acid chain: Adenylate kinase (215 aa).

An ATP-binding site is contributed by 10–15 (GAGKGT). Positions 30–60 (STGDMLRAAIIKAGTEMGKQAKSVIDAGQLV) are NMP. AMP is bound by residues threonine 31, arginine 36, 58–60 (QLV), 86–89 (GFPR), and glutamine 93. The interval 123–160 (GRRAHLPSGRTYHVTFNPSKVEGQDDVTGEPLVIREDD) is LID. ATP-binding positions include arginine 124 and 133–134 (TY). Positions 157 and 168 each coordinate AMP. Lysine 201 is an ATP binding site.

The protein belongs to the adenylate kinase family. As to quaternary structure, monomer.

Its subcellular location is the cytoplasm. The enzyme catalyses AMP + ATP = 2 ADP. The protein operates within purine metabolism; AMP biosynthesis via salvage pathway; AMP from ADP: step 1/1. Catalyzes the reversible transfer of the terminal phosphate group between ATP and AMP. Plays an important role in cellular energy homeostasis and in adenine nucleotide metabolism. The protein is Adenylate kinase of Aliivibrio salmonicida (strain LFI1238) (Vibrio salmonicida (strain LFI1238)).